The primary structure comprises 275 residues: Aldo-keto reductase MSMEG_2408/MSMEI_2347 (275 aa).

Tyr49 acts as the Proton donor in catalysis. Leu189, Ile227, Lys229, Ser230, Val231, Arg235, Ser238, and Asn239 together coordinate NADPH. Residue Lys262 forms an Isoglutamyl lysine isopeptide (Lys-Gln) (interchain with Q-Cter in protein Pup) linkage.

This sequence belongs to the aldo/keto reductase family.

In Mycolicibacterium smegmatis (strain ATCC 700084 / mc(2)155) (Mycobacterium smegmatis), this protein is Aldo-keto reductase MSMEG_2408/MSMEI_2347.